The following is a 255-amino-acid chain: Thiazole synthase (255 aa).

Catalysis depends on K96, which acts as the Schiff-base intermediate with DXP. Residues G157, 183–184, and 205–206 each bind 1-deoxy-D-xylulose 5-phosphate; these read AG and NT.

It belongs to the ThiG family. Homotetramer. Forms heterodimers with either ThiH or ThiS.

The protein resides in the cytoplasm. The enzyme catalyses [ThiS sulfur-carrier protein]-C-terminal-Gly-aminoethanethioate + 2-iminoacetate + 1-deoxy-D-xylulose 5-phosphate = [ThiS sulfur-carrier protein]-C-terminal Gly-Gly + 2-[(2R,5Z)-2-carboxy-4-methylthiazol-5(2H)-ylidene]ethyl phosphate + 2 H2O + H(+). It functions in the pathway cofactor biosynthesis; thiamine diphosphate biosynthesis. Functionally, catalyzes the rearrangement of 1-deoxy-D-xylulose 5-phosphate (DXP) to produce the thiazole phosphate moiety of thiamine. Sulfur is provided by the thiocarboxylate moiety of the carrier protein ThiS. In vitro, sulfur can be provided by H(2)S. In Staphylococcus epidermidis (strain ATCC 35984 / DSM 28319 / BCRC 17069 / CCUG 31568 / BM 3577 / RP62A), this protein is Thiazole synthase.